The sequence spans 401 residues: Argininosuccinate synthase (401 aa).

8–16 lines the ATP pocket; that stretch reads AYSGGLDTT. Position 87 (Tyr-87) interacts with L-citrulline. Gly-117 is an ATP binding site. L-aspartate-binding residues include Thr-119, Asn-123, and Asp-124. L-citrulline is bound at residue Asn-123. The L-citrulline site is built by Arg-127, Ser-175, Glu-259, and Tyr-271.

Belongs to the argininosuccinate synthase family. Type 1 subfamily. Homotetramer.

The protein resides in the cytoplasm. The enzyme catalyses L-citrulline + L-aspartate + ATP = 2-(N(omega)-L-arginino)succinate + AMP + diphosphate + H(+). It participates in amino-acid biosynthesis; L-arginine biosynthesis; L-arginine from L-ornithine and carbamoyl phosphate: step 2/3. The chain is Argininosuccinate synthase from Corynebacterium glutamicum (strain ATCC 13032 / DSM 20300 / JCM 1318 / BCRC 11384 / CCUG 27702 / LMG 3730 / NBRC 12168 / NCIMB 10025 / NRRL B-2784 / 534).